Reading from the N-terminus, the 194-residue chain is Anthranilate synthase component 2 (194 aa).

The 193-residue stretch at 2 to 194 (KIFFIDNFDS…QSVGFLRELS (193 aa)) folds into the Glutamine amidotransferase type-1 domain. 57-59 (GPG) serves as a coordination point for L-glutamine. Cys-84 (nucleophile; for GATase activity) is an active-site residue. Residues Gln-88 and 134 to 135 (SL) each bind L-glutamine. Residues His-170 and Glu-172 each act as for GATase activity in the active site.

In terms of assembly, heterotetramer consisting of two non-identical subunits: a beta subunit (TrpG) and a large alpha subunit (TrpE).

It carries out the reaction chorismate + L-glutamine = anthranilate + pyruvate + L-glutamate + H(+). It functions in the pathway amino-acid biosynthesis; L-tryptophan biosynthesis; L-tryptophan from chorismate: step 1/5. Functionally, part of a heterotetrameric complex that catalyzes the two-step biosynthesis of anthranilate, an intermediate in the biosynthesis of L-tryptophan. In the first step, the glutamine-binding beta subunit (TrpG) of anthranilate synthase (AS) provides the glutamine amidotransferase activity which generates ammonia as a substrate that, along with chorismate, is used in the second step, catalyzed by the large alpha subunit of AS (TrpE) to produce anthranilate. In the absence of TrpG, TrpE can synthesize anthranilate directly from chorismate and high concentrations of ammonia. The protein is Anthranilate synthase component 2 (trpG) of Helicobacter pylori (strain J99 / ATCC 700824) (Campylobacter pylori J99).